Here is a 251-residue protein sequence, read N- to C-terminus: Hydroxyacylglutathione hydrolase (251 aa).

Zn(2+) contacts are provided by His53, His55, Asp57, His58, His110, Asp127, and His165.

It belongs to the metallo-beta-lactamase superfamily. Glyoxalase II family. As to quaternary structure, monomer. Zn(2+) is required as a cofactor.

It carries out the reaction an S-(2-hydroxyacyl)glutathione + H2O = a 2-hydroxy carboxylate + glutathione + H(+). It participates in secondary metabolite metabolism; methylglyoxal degradation; (R)-lactate from methylglyoxal: step 2/2. In terms of biological role, thiolesterase that catalyzes the hydrolysis of S-D-lactoyl-glutathione to form glutathione and D-lactic acid. The protein is Hydroxyacylglutathione hydrolase of Shigella dysenteriae serotype 1 (strain Sd197).